The primary structure comprises 499 residues: MSTKKHTKTHSTYAFESNTNSVAASQMRNALNKLADSSKLDDAARAKFENELDSFFTLFRRYLVEKSSRTTLEWDKIKSPNPDEVVKYEIISQQPENVSNLSKLAVLKLNGGLGTSMGCVGPKSVIEVREGNTFLDLSVRQIEYLNRQYDSDVPLLLMNSFNTDKDTEHLIKKYSANRIRIRSFNQSRFPRVYKDSLLPVPTEYDSPLDAWYPPGHGDLFESLHVSGELDALIAQGREILFVSNGDNLGATVDLKILNHMIETGAEYIMELTDKTRADVKGGTLISYDGQVRLLEVAQVPKEHIDEFKNIRKFTNFNTNNLWINLKAVKRLIESSNLEMEIIPNQKTITRDGHEINVLQLETACGAAIRHFDGAHGVVVPRSRFLPVKTCSDLLLVKSDLFRLEHGSLKLDPSRFGPNPLIKLGSHFKKVSGFNARIPHIPKIVELDHLTITGNVFLGKDVTLRGTVIIVCSDGHKIDIPNGSILENVVVTGNLQILEH.

Serine 2 bears the N-acetylserine mark. A Phosphoserine modification is found at serine 17. Threonine 19 is modified (phosphothreonine). Phosphoserine is present on residues serine 21 and serine 79. Residues 109–112 (LNGG), lysine 123, glutamine 186, and glycine 215 each bind UTP. 111–112 (GG) lines the substrate pocket. Lysine 123 contacts Mg(2+). Residues histidine 216 and 244-246 (NGD) contribute to the substrate site. Aspartate 246 contacts UTP. A Mg(2+)-binding site is contributed by aspartate 246. The residue at position 369 (arginine 369) is an Omega-N-methylarginine. Lysine 388 is a UTP binding site. Residue lysine 388 is part of the active site. The tract at residues 448 to 499 (HLTITGNVFLGKDVTLRGTVIIVCSDGHKIDIPNGSILENVVVTGNLQILEH) is oligomerization.

The protein belongs to the UDPGP type 1 family. In terms of assembly, homooctamer.

It catalyses the reaction alpha-D-glucose 1-phosphate + UTP + H(+) = UDP-alpha-D-glucose + diphosphate. In terms of biological role, plays a central role as a glucosyl donor in cellular metabolic pathways. The polypeptide is UTP--glucose-1-phosphate uridylyltransferase (Saccharomyces cerevisiae (strain ATCC 204508 / S288c) (Baker's yeast)).